We begin with the raw amino-acid sequence, 459 residues long: U1 small nuclear ribonucleoprotein 70 kDa (459 aa).

The RRM domain maps to 99–178; sequence KTIFVSRISY…RRIVVDIERG (80 aa). Positions 185 to 459 are disordered; that stretch reads KPRKFGGGLG…YSMISNENGF (275 aa). A compositionally biased stretch (basic and acidic residues) spans 211-241; that stretch reads EMSESREKEKEREKEKEKEKERMEKMKKRDG. The segment covering 242-254 has biased composition (low complexity); that stretch reads GLSSNGNRSNGIS. Residues 263-408 are compositionally biased toward basic and acidic residues; that stretch reads DRGDRGDRDR…IDERRRDQRD (146 aa). The segment covering 426 to 440 has biased composition (basic residues); that stretch reads QHHHHQQNHQSHHNQ.

The protein localises to the nucleus. In terms of biological role, mediates the splicing of pre-mRNA by binding to the stem loop I region of U1-snRNA. The sequence is that of U1 small nuclear ribonucleoprotein 70 kDa (snrnp70) from Dictyostelium discoideum (Social amoeba).